A 302-amino-acid chain; its full sequence is Bifunctional protein FolD (302 aa).

NADP(+) is bound by residues 165–167, S190, and I231; that span reads GRS.

The protein belongs to the tetrahydrofolate dehydrogenase/cyclohydrolase family. Homodimer.

It carries out the reaction (6R)-5,10-methylene-5,6,7,8-tetrahydrofolate + NADP(+) = (6R)-5,10-methenyltetrahydrofolate + NADPH. The enzyme catalyses (6R)-5,10-methenyltetrahydrofolate + H2O = (6R)-10-formyltetrahydrofolate + H(+). It participates in one-carbon metabolism; tetrahydrofolate interconversion. Functionally, catalyzes the oxidation of 5,10-methylenetetrahydrofolate to 5,10-methenyltetrahydrofolate and then the hydrolysis of 5,10-methenyltetrahydrofolate to 10-formyltetrahydrofolate. This Prochlorococcus marinus (strain SARG / CCMP1375 / SS120) protein is Bifunctional protein FolD.